We begin with the raw amino-acid sequence, 400 residues long: Ubiquitin-like modifier-activating enzyme 5 (400 aa).

Gly76, Asp97, Lys120, Asn143, and Asn177 together coordinate ATP. Cys219 and Cys222 together coordinate Zn(2+). Cys243 (glycyl thioester intermediate) is an active-site residue. Zn(2+) is bound by residues Cys296 and Cys301.

It belongs to the ubiquitin-activating E1 family. UBA5 subfamily.

E1-like enzyme which activates UFM1. The sequence is that of Ubiquitin-like modifier-activating enzyme 5 from Drosophila virilis (Fruit fly).